The sequence spans 549 residues: Cytoplasmic trehalase (549 aa).

Residues Arg168, 175 to 176 (WD), Asn212, 221 to 223 (RSQ), 292 to 294 (RDE), and Gly324 each bind substrate. Residues Asp326 and Glu509 each act as proton donor/acceptor in the active site. Glu525 provides a ligand contact to substrate.

The protein belongs to the glycosyl hydrolase 37 family. As to quaternary structure, monomer.

Its subcellular location is the cytoplasm. The enzyme catalyses alpha,alpha-trehalose + H2O = alpha-D-glucose + beta-D-glucose. The protein operates within glycan degradation; trehalose degradation; D-glucose from alpha,alpha-trehalose: step 1/1. Hydrolyzes trehalose to glucose. Could be involved, in cells returning to low osmolarity conditions, in the utilization of the accumulated cytoplasmic trehalose, which was synthesized in response to high osmolarity. The sequence is that of Cytoplasmic trehalase from Shigella flexneri serotype 5b (strain 8401).